The chain runs to 1361 residues: DNA-directed RNA polymerase subunit beta' (1361 aa).

Zn(2+)-binding residues include Cys69, Cys71, Cys84, and Cys87. Residues Asp460, Asp462, and Asp464 each contribute to the Mg(2+) site. The Zn(2+) site is built by Cys808, Cys882, Cys889, and Cys892.

Belongs to the RNA polymerase beta' chain family. The RNAP catalytic core consists of 2 alpha, 1 beta, 1 beta' and 1 omega subunit. When a sigma factor is associated with the core the holoenzyme is formed, which can initiate transcription. Mg(2+) serves as cofactor. Requires Zn(2+) as cofactor.

The catalysed reaction is RNA(n) + a ribonucleoside 5'-triphosphate = RNA(n+1) + diphosphate. DNA-dependent RNA polymerase catalyzes the transcription of DNA into RNA using the four ribonucleoside triphosphates as substrates. This chain is DNA-directed RNA polymerase subunit beta', found in Rickettsia bellii (strain RML369-C).